The chain runs to 480 residues: 2-phosphoxylose phosphatase 1 (480 aa).

Residues 1–6 (MLYRNR) lie on the Cytoplasmic side of the membrane. A helical; Signal-anchor for type II membrane protein membrane pass occupies residues 7–27 (FLVLLALAGLLAFLSLSLQFF). Topologically, residues 28 to 480 (HLIPVSTTKN…YYDACHGEGA (453 aa)) are lumenal. The active-site Nucleophile is His97. Asn194, Asn305, and Asn354 each carry an N-linked (GlcNAc...) asparagine glycan. Catalysis depends on Asp379, which acts as the Proton donor.

This sequence belongs to the histidine acid phosphatase family. In terms of assembly, interacts with B3GAT3; the interaction increases the 2-phosphoxylose phosphatase activity of PXYLP1 during completion of linkage region formation in a B3GAT3-mediated manner.

It is found in the golgi apparatus membrane. It catalyses the reaction 3-O-[beta-D-GlcA-(1-&gt;3)-beta-D-Gal-(1-&gt;3)-beta-D-Gal-(1-&gt;4)-beta-D-2-O-P-Xyl]-L-seryl-[protein] + H2O = 3-O-(beta-D-GlcA-(1-&gt;3)-beta-D-Gal-(1-&gt;3)-beta-D-Gal-(1-&gt;4)-beta-D-Xyl)-L-seryl-[protein] + phosphate. Its function is as follows. Responsible for the 2-O-dephosphorylation of xylose in the glycosaminoglycan-protein linkage region of proteoglycans thereby regulating the amount of mature glycosaminoglycan (GAG) chains. Sulfated glycosaminoglycans (GAGs), including heparan sulfate and chondroitin sulfate, are synthesized on the so-called common GAG-protein linkage region (GlcUAbeta1-3Galbeta1-3Galbeta1-4Xylbeta1-O-Ser) of core proteins, which is formed by the stepwise addition of monosaccharide residues by the respective specific glycosyltransferases. Xylose 2-O-dephosphorylation during completion of linkage region formation is a prerequisite for the initiation and efficient elongation of the repeating disaccharide region of GAG chains. The polypeptide is 2-phosphoxylose phosphatase 1 (Rattus norvegicus (Rat)).